A 380-amino-acid chain; its full sequence is Cytochrome b (380 aa).

The next 4 helical transmembrane spans lie at 33-53, 77-98, 113-133, and 178-198; these read FGSL…FLAM, WIIR…FLHV, WNIG…GYVL, and FFTL…LHLL. Residues histidine 83 and histidine 97 each contribute to the heme b site. Heme b contacts are provided by histidine 182 and histidine 196. Histidine 201 is a binding site for a ubiquinone. 4 helical membrane-spanning segments follow: residues 226–246, 288–308, 320–340, and 347–367; these read TKDI…TLFS, LGGV…PILH, LSQL…WIGG, and FITI…ILMP.

This sequence belongs to the cytochrome b family. As to quaternary structure, the cytochrome bc1 complex contains 11 subunits: 3 respiratory subunits (MT-CYB, CYC1 and UQCRFS1), 2 core proteins (UQCRC1 and UQCRC2) and 6 low-molecular weight proteins (UQCRH/QCR6, UQCRB/QCR7, UQCRQ/QCR8, UQCR10/QCR9, UQCR11/QCR10 and a cleavage product of UQCRFS1). This cytochrome bc1 complex then forms a dimer. It depends on heme b as a cofactor.

It localises to the mitochondrion inner membrane. Component of the ubiquinol-cytochrome c reductase complex (complex III or cytochrome b-c1 complex) that is part of the mitochondrial respiratory chain. The b-c1 complex mediates electron transfer from ubiquinol to cytochrome c. Contributes to the generation of a proton gradient across the mitochondrial membrane that is then used for ATP synthesis. In Pan paniscus (Pygmy chimpanzee), this protein is Cytochrome b (MT-CYB).